A 449-amino-acid polypeptide reads, in one-letter code: MVAVAILAAGKGTRMKSDLPKVLHPLGGRSLVERVIESCALIKPERICTIVGYRAAEVKMALAHLPHLEFVEQTEQLGTGHAVQQLLEPLKDFVGDVVILNGDVPLLRPETIADLVSTHQKNNNDATLLTAQLPNPTGYGRVFCDGDNLVTQIVEHRDCNDAQRKNNRINAGVYCFKWGVLAEALPKLTTNNDQQEYYLTDVILHCDKVMAMDVADFQEISGINDRFQLSAAYEILQDRIKEKWMKAGVMIHQPDTVTIDDTVQLEPDVMIEPQTHLRGNSLIKTGCRLGPGSLIENSVIEANTTILYSVVSDSQVGENAQIGPYTHIRGQAKVGEQCRIGNFVEVKKSTIGNNTNMAHLSYIGDATLGAKVNIGAGTITANYDGVNKHQTVIGDRSKTGANSVLVAPITIGEDVTIAAGSTITKDVDNDCLVVARARQKEIKGWRLQS.

The pyrophosphorylase stretch occupies residues 1-226 (MVAVAILAAG…FQEISGINDR (226 aa)). UDP-N-acetyl-alpha-D-glucosamine is bound by residues 7 to 10 (LAAG), Lys-21, Gln-73, and 78 to 79 (GT). Asp-103 serves as a coordination point for Mg(2+). Positions 140, 155, 170, and 224 each coordinate UDP-N-acetyl-alpha-D-glucosamine. Residue Asn-224 participates in Mg(2+) binding. The segment at 227-247 (FQLSAAYEILQDRIKEKWMKA) is linker. The N-acetyltransferase stretch occupies residues 248-449 (GVMIHQPDTV…KEIKGWRLQS (202 aa)). Arg-329 and Lys-347 together coordinate UDP-N-acetyl-alpha-D-glucosamine. The active-site Proton acceptor is His-359. 2 residues coordinate UDP-N-acetyl-alpha-D-glucosamine: Tyr-362 and Asn-373. Acetyl-CoA is bound by residues Ala-376, 382 to 383 (NY), Ala-419, and Arg-436.

In the N-terminal section; belongs to the N-acetylglucosamine-1-phosphate uridyltransferase family. It in the C-terminal section; belongs to the transferase hexapeptide repeat family. In terms of assembly, homotrimer. It depends on Mg(2+) as a cofactor.

The protein localises to the cytoplasm. The catalysed reaction is alpha-D-glucosamine 1-phosphate + acetyl-CoA = N-acetyl-alpha-D-glucosamine 1-phosphate + CoA + H(+). The enzyme catalyses N-acetyl-alpha-D-glucosamine 1-phosphate + UTP + H(+) = UDP-N-acetyl-alpha-D-glucosamine + diphosphate. The protein operates within nucleotide-sugar biosynthesis; UDP-N-acetyl-alpha-D-glucosamine biosynthesis; N-acetyl-alpha-D-glucosamine 1-phosphate from alpha-D-glucosamine 6-phosphate (route II): step 2/2. It participates in nucleotide-sugar biosynthesis; UDP-N-acetyl-alpha-D-glucosamine biosynthesis; UDP-N-acetyl-alpha-D-glucosamine from N-acetyl-alpha-D-glucosamine 1-phosphate: step 1/1. It functions in the pathway bacterial outer membrane biogenesis; LPS lipid A biosynthesis. Its function is as follows. Catalyzes the last two sequential reactions in the de novo biosynthetic pathway for UDP-N-acetylglucosamine (UDP-GlcNAc). The C-terminal domain catalyzes the transfer of acetyl group from acetyl coenzyme A to glucosamine-1-phosphate (GlcN-1-P) to produce N-acetylglucosamine-1-phosphate (GlcNAc-1-P), which is converted into UDP-GlcNAc by the transfer of uridine 5-monophosphate (from uridine 5-triphosphate), a reaction catalyzed by the N-terminal domain. In Picosynechococcus sp. (strain ATCC 27264 / PCC 7002 / PR-6) (Agmenellum quadruplicatum), this protein is Bifunctional protein GlmU.